The sequence spans 287 residues: Protoheme IX farnesyltransferase (287 aa).

7 consecutive transmembrane segments (helical) span residues Leu-19 to Thr-39, Met-100 to Val-120, Phe-134 to Val-154, Met-162 to Ala-182, Val-212 to Trp-232, Val-233 to Ala-253, and Val-267 to Phe-287.

It belongs to the UbiA prenyltransferase family. Protoheme IX farnesyltransferase subfamily.

It is found in the cell inner membrane. It carries out the reaction heme b + (2E,6E)-farnesyl diphosphate + H2O = Fe(II)-heme o + diphosphate. It functions in the pathway porphyrin-containing compound metabolism; heme O biosynthesis; heme O from protoheme: step 1/1. Functionally, converts heme B (protoheme IX) to heme O by substitution of the vinyl group on carbon 2 of heme B porphyrin ring with a hydroxyethyl farnesyl side group. The polypeptide is Protoheme IX farnesyltransferase (Nitratidesulfovibrio vulgaris (strain ATCC 29579 / DSM 644 / CCUG 34227 / NCIMB 8303 / VKM B-1760 / Hildenborough) (Desulfovibrio vulgaris)).